A 184-amino-acid chain; its full sequence is Photosystem I assembly protein Ycf4 (184 aa).

2 consecutive transmembrane segments (helical) span residues isoleucine 19–glycine 39 and isoleucine 57–serine 77.

Belongs to the Ycf4 family.

Its subcellular location is the plastid. It is found in the chloroplast thylakoid membrane. In terms of biological role, seems to be required for the assembly of the photosystem I complex. This chain is Photosystem I assembly protein Ycf4, found in Solanum bulbocastanum (Wild potato).